The chain runs to 647 residues: A-type voltage-gated potassium channel KCND1 (647 aa).

The Cytoplasmic segment spans residues 1-183 (MAAGVATWLP…RAFENPHTST (183 aa)). Positions 2-20 (AAGVATWLPFARAAAVGWL) are interaction with KCNIP1, KCNIP2, and other family members. Zn(2+) contacts are provided by histidine 104, cysteine 131, and cysteine 132. Residues 144-164 (AQRLAEDEEAEQTGDGPALPA) form a disordered region. Residues 184-205 (AALVFYYVTGFFIAVSVIANVV) traverse the membrane as a helical segment. The Extracellular portion of the chain corresponds to 206–230 (ETIPCRGPARRPPREQPCGDRFPLA). The helical transmembrane segment at 231 to 252 (FFCMDTACVLIFTGEYLLRLFA) threads the bilayer. Topologically, residues 253 to 263 (APSRCRFLRSV) are cytoplasmic. A helical membrane pass occupies residues 264–284 (MSLIDVVAILPYYIGLLVPKN). The Extracellular segment spans residues 285-287 (EDV). Residues 288–308 (SGAFVTLRVFRVFRIFKFSRH) traverse the membrane as a helical; Voltage-sensor segment. Residues 309 to 323 (SQGLRILGYTLKSCA) lie on the Cytoplasmic side of the membrane. Residues 310 to 323 (QGLRILGYTLKSCA) are S4-S5 linker. A helical transmembrane segment spans residues 324-345 (SELGFLLFSLTMAIIIFATVMF). The Extracellular portion of the chain corresponds to 346–359 (YAEKGTSKTNFTSI). An intramembrane region (helical) is located at residues 360-371 (PAAFWYTIVTMT). The short motif at 372–377 (TLGYGD) is the Selectivity filter element. Residues 372 to 379 (TLGYGDMV) lie within the membrane without spanning it. The Extracellular segment spans residues 380-386 (PSTIAGK). A helical transmembrane segment spans residues 387-415 (IFGSICSLSGVLVIALPVPVIVSNFSRIY). Over 416 to 647 (HQNQRADKRR…LPETVKISSL (232 aa)) the chain is Cytoplasmic. The segment at 474-489 (FEQQHHHLLHCLEKTT) is required for dendritic targeting. Over residues 510 to 520 (GRTSRSTSVSS) the composition is skewed to low complexity. Positions 510–531 (GRTSRSTSVSSQPVGPSSLLSS) are disordered. Polar residues predominate over residues 521-530 (QPVGPSSLLS). Residue serine 555 is modified to Phosphoserine. 2 disordered regions span residues 564–584 (GLRRSPGPQSRSSLNAKPHDS) and 601–634 (IPTPPANTPDESQPSSPGGGGRASSTLRNSRLGT).

It belongs to the potassium channel family. D (Shal) (TC 1.A.1.2) subfamily. Kv4.1/KCND1 sub-subfamily. Component of heteromultimeric potassium channels. Identified in potassium channel complexes containing KCND1, KCND2, KCND3, KCNIP1, KCNIP2, KCNIP3, KCNIP4, DPP6 and DPP10. Detected in carotid body chemoreceptor cells and in frontal cortex.

It localises to the cell membrane. It carries out the reaction K(+)(in) = K(+)(out). In terms of biological role, A-type voltage-gated potassium channel that mediates transmembrane potassium transport in excitable membranes in the brain. Mediates A-type current I(SA) in suprachiasmatic nucleus (SCN) neurons. Exhibits a low-threshold A-type current with a hyperpolarized steady-state inactivation midpoint and the recovery process was steeply voltage-dependent, with recovery being markedly faster at more negative potentials. May regulates repetitive firing rates in the suprachiasmatic nucleus (SCN) neurons and circadian rhythms in neuronal excitability and behavior. Contributes to the regulation of the circadian rhythm of action potential firing in suprachiasmatic nucleus neurons, which regulates the circadian rhythm of locomotor activity. The regulatory subunit KCNIP1 modulates the kinetics of channel inactivation, increases the current amplitudes and accelerates recovery from inactivation, shifts activation in a depolarizing direction. The regulatory subunit DPP10 decreases the voltage sensitivity of the inactivation channel gating. The chain is A-type voltage-gated potassium channel KCND1 from Oryctolagus cuniculus (Rabbit).